The primary structure comprises 246 residues: uncharacterized protein (246 aa).

This sequence to M.jannaschii MJ1676.

This is an uncharacterized protein from Methanothermobacter thermautotrophicus (strain ATCC 29096 / DSM 1053 / JCM 10044 / NBRC 100330 / Delta H) (Methanobacterium thermoautotrophicum).